The sequence spans 132 residues: MTMTDPLGDMITRIRNAQLRGKGKVVTPASKLRGWVLDVLAEEGFIRGYARVEYPGGKSDFEIELKYNEGAPVIQMIERVSTPGRRVYSSVKTMPTVHNGLGISILSTPKGIMSDVAAREQNVGGEVLCRVF.

It belongs to the universal ribosomal protein uS8 family. As to quaternary structure, part of the 30S ribosomal subunit. Contacts proteins S5 and S12.

Functionally, one of the primary rRNA binding proteins, it binds directly to 16S rRNA central domain where it helps coordinate assembly of the platform of the 30S subunit. The polypeptide is Small ribosomal subunit protein uS8 (Parvibaculum lavamentivorans (strain DS-1 / DSM 13023 / NCIMB 13966)).